The following is a 335-amino-acid chain: Glutamyl-tRNA reductase (335 aa).

Residues 60–63 (TCHR), Ser110, 115–117 (ETE), and Gln121 contribute to the substrate site. The Nucleophile role is filled by Cys61. 189–194 (GYSEIN) is an NADP(+) binding site.

Belongs to the glutamyl-tRNA reductase family. In terms of assembly, homodimer.

The catalysed reaction is (S)-4-amino-5-oxopentanoate + tRNA(Glu) + NADP(+) = L-glutamyl-tRNA(Glu) + NADPH + H(+). It participates in porphyrin-containing compound metabolism; protoporphyrin-IX biosynthesis; 5-aminolevulinate from L-glutamyl-tRNA(Glu): step 1/2. Catalyzes the NADPH-dependent reduction of glutamyl-tRNA(Glu) to glutamate 1-semialdehyde (GSA). The sequence is that of Glutamyl-tRNA reductase from Chlamydia trachomatis serovar A (strain ATCC VR-571B / DSM 19440 / HAR-13).